The primary structure comprises 207 residues: Guanylate kinase (207 aa).

One can recognise a Guanylate kinase-like domain in the interval 4 to 184; sequence GTLYIVSAPS…ALSDLKTIIR (181 aa). An ATP-binding site is contributed by 11–18; sequence APSGAGKS.

It belongs to the guanylate kinase family.

The protein localises to the cytoplasm. It carries out the reaction GMP + ATP = GDP + ADP. In terms of biological role, essential for recycling GMP and indirectly, cGMP. In Yersinia pestis bv. Antiqua (strain Antiqua), this protein is Guanylate kinase.